The following is a 775-amino-acid chain: Ankyrin repeat and EF-hand domain-containing protein 1 (775 aa).

ANK repeat units lie at residues Asp47–Val76, Thr184–Ala213, Asp217–Leu246, Asp250–Trp279, Thr524–Ala553, Phe557–Ala586, Asn590–Ile619, and Lys623–Lys652.

The chain is Ankyrin repeat and EF-hand domain-containing protein 1 (Ankef1) from Mus musculus (Mouse).